The following is a 620-amino-acid chain: Probable protein arginine N-methyltransferase 3 (620 aa).

The segment covering Met1–Glu17 has biased composition (basic and acidic residues). Positions Met1–Gly45 are disordered. Over residues Asp18–Gly45 the composition is skewed to acidic residues. The segment at Leu55–His78 adopts a C2H2-type 1 zinc-finger fold. Residues Asn110–Leu137 form a C2H2-type 2; degenerate zinc finger. Residues Asp253–Ser582 enclose the SAM-dependent MTase PRMT-type domain. S-adenosyl-L-homocysteine-binding residues include Arg275, Gly299, Asp321, Ser323, and Glu364. Active-site residues include Glu383 and Glu392.

This sequence belongs to the class I-like SAM-binding methyltransferase superfamily. Protein arginine N-methyltransferase family.

It localises to the cytoplasm. The protein resides in the cytosol. It catalyses the reaction L-arginyl-[protein] + S-adenosyl-L-methionine = N(omega)-methyl-L-arginyl-[protein] + S-adenosyl-L-homocysteine + H(+). The enzyme catalyses L-arginyl-[protein] + 2 S-adenosyl-L-methionine = N(omega),N(omega)-dimethyl-L-arginyl-[protein] + 2 S-adenosyl-L-homocysteine + 2 H(+). Protein-arginine N-methyltransferase that catalyzes both the monomethylation and asymmetric dimethylation of the guanidino nitrogens of arginine residues in target proteins, and therefore falls into the group of type I methyltransferases. The protein is Probable protein arginine N-methyltransferase 3 (PRMT3) of Oryza sativa subsp. indica (Rice).